Reading from the N-terminus, the 55-residue chain is Trypsin inhibitor ClTI-1 (55 aa).

One can recognise a Kazal-like domain in the interval 1 to 55 (SIPPACDKYSRLPGCPRDYSPVCGTDGKTYPNECVLCLSNSEENKNVQIYKSGMC). Cystine bridges form between cysteine 6/cysteine 37, cysteine 15/cysteine 34, and cysteine 23/cysteine 55.

Its subcellular location is the secreted. Functionally, inhibits trypsin and plasmin. The sequence is that of Trypsin inhibitor ClTI-1 from Gallus gallus (Chicken).